We begin with the raw amino-acid sequence, 124 residues long: Small ribosomal subunit protein uS12cz/uS12cy (124 aa).

This sequence belongs to the universal ribosomal protein uS12 family. As to quaternary structure, part of the 30S ribosomal subunit.

It is found in the plastid. It localises to the chloroplast. With S4 and S5 plays an important role in translational accuracy. Located at the interface of the 30S and 50S subunits. The protein is Small ribosomal subunit protein uS12cz/uS12cy (rps12-A) of Agrostis stolonifera (Creeping bentgrass).